The sequence spans 451 residues: Zinc metalloproteinase nas-16 (451 aa).

A Peptidase M12A domain is found at 70-273; that stretch reads QVVTKLFSPQ…LTINTAYNCK (204 aa). Cystine bridges form between Cys127/Cys272, Cys148/Cys167, Cys274/Cys291, and Cys296/Cys305. Residue Asn133 is glycosylated (N-linked (GlcNAc...) asparagine). Residue His175 participates in Zn(2+) binding. Glu176 is a catalytic residue. 2 residues coordinate Zn(2+): His179 and His185. The 40-residue stretch at 267-306 folds into the EGF-like domain; sequence NTAYNCKCPSELLCANGGYTNPSNCLECICPLGYGGVLCD. N-linked (GlcNAc...) asparagine glycosylation is found at Asn363 and Asn438.

The cofactor is Zn(2+).

It is found in the secreted. In terms of biological role, metalloprotease. This is Zinc metalloproteinase nas-16 (nas-16) from Caenorhabditis elegans.